Reading from the N-terminus, the 297-residue chain is 5'-3' exonuclease (297 aa).

The 5'-3' exonuclease domain occupies 171-262 (EPDQIVDFKA…MKLEKELFAI (92 aa)).

5'-3' exonuclease acting preferentially on double-stranded DNA. The polypeptide is 5'-3' exonuclease (polA) (Mycoplasmopsis pulmonis (strain UAB CTIP) (Mycoplasma pulmonis)).